A 246-amino-acid polypeptide reads, in one-letter code: Dihydroorotate dehydrogenase B (NAD(+)), electron transfer subunit (246 aa).

The 93-residue stretch at Met3 to Ile95 folds into the FAD-binding FR-type domain. FAD-binding positions include Arg48–Ser51 and Gly70–Thr71. The [2Fe-2S] cluster site is built by Cys213, Cys218, Cys221, and Cys233.

Belongs to the PyrK family. In terms of assembly, heterotetramer of 2 PyrK and 2 PyrD type B subunits. [2Fe-2S] cluster serves as cofactor. The cofactor is FAD.

It participates in pyrimidine metabolism; UMP biosynthesis via de novo pathway; orotate from (S)-dihydroorotate (NAD(+) route): step 1/1. Functionally, responsible for channeling the electrons from the oxidation of dihydroorotate from the FMN redox center in the PyrD type B subunit to the ultimate electron acceptor NAD(+). The protein is Dihydroorotate dehydrogenase B (NAD(+)), electron transfer subunit of Clostridium perfringens (strain 13 / Type A).